The chain runs to 523 residues: 2-isopropylmalate synthase (523 aa).

The Pyruvate carboxyltransferase domain occupies 5–267 (VIIFDTTLRD…HTAINHQEIW (263 aa)). 4 residues coordinate Mn(2+): Asp14, His202, His204, and Asn238. The segment at 392-523 (RLDYFSVQSG…QHNENNKETV (132 aa)) is regulatory domain.

It belongs to the alpha-IPM synthase/homocitrate synthase family. LeuA type 1 subfamily. Homodimer. The cofactor is Mn(2+).

Its subcellular location is the cytoplasm. It carries out the reaction 3-methyl-2-oxobutanoate + acetyl-CoA + H2O = (2S)-2-isopropylmalate + CoA + H(+). It participates in amino-acid biosynthesis; L-leucine biosynthesis; L-leucine from 3-methyl-2-oxobutanoate: step 1/4. In terms of biological role, catalyzes the condensation of the acetyl group of acetyl-CoA with 3-methyl-2-oxobutanoate (2-ketoisovalerate) to form 3-carboxy-3-hydroxy-4-methylpentanoate (2-isopropylmalate). This is 2-isopropylmalate synthase from Shigella sonnei (strain Ss046).